A 239-amino-acid polypeptide reads, in one-letter code: Ribosomal RNA small subunit methyltransferase G (239 aa).

Residues Gly-79, Phe-84, 130 to 131 (AE), and Arg-149 each bind S-adenosyl-L-methionine. The segment covering 218–227 (KHKKTPKKYP) has biased composition (basic residues). Positions 218-239 (KHKKTPKKYPRQAGTPNKKPIA) are disordered.

Belongs to the methyltransferase superfamily. RNA methyltransferase RsmG family.

Its subcellular location is the cytoplasm. In terms of biological role, specifically methylates the N7 position of a guanine in 16S rRNA. In Leuconostoc citreum (strain KM20), this protein is Ribosomal RNA small subunit methyltransferase G.